A 64-amino-acid chain; its full sequence is Large ribosomal subunit protein bL35 (64 aa).

Belongs to the bacterial ribosomal protein bL35 family.

This Vibrio campbellii (strain ATCC BAA-1116) protein is Large ribosomal subunit protein bL35.